The sequence spans 85 residues: Small ribosomal subunit protein bS20 (85 aa).

2 disordered regions span residues 1 to 25 and 62 to 85; these read MANI…ASIK and ARKG…QVNA.

It belongs to the bacterial ribosomal protein bS20 family.

Functionally, binds directly to 16S ribosomal RNA. The protein is Small ribosomal subunit protein bS20 of Bacillus cereus (strain G9842).